We begin with the raw amino-acid sequence, 910 residues long: Disease susceptibility protein LOV1 (910 aa).

Residues 22–60 (ARLNGIGEQVDGLKRQLGRLQSLLKDADAKKHESERVRN) adopt a coiled-coil conformation. The 293-residue stretch at 169–461 (EQSVEALAGH…AAEGIITSSD (293 aa)) folds into the NB-ARC domain. 6 LRR repeats span residues 584–609 (LPLL…IGDL), 610–632 (IHLR…LRNL), 634–655 (LLLY…LKEM), 700–725 (MTKL…LGQL), 726–751 (RSLE…IVLN), and 847–871 (MPLL…NYIT).

The protein belongs to the disease resistance NB-LRR family. RPP8/HRT subfamily.

Its function is as follows. Confers susceptibility to the fungus Cochliobolus victoriae by conditioning victorin-dependent (victorin is a toxin synthesized by C.victoriae) induction of defense-associated proteins. The protein is Disease susceptibility protein LOV1 (LOV1) of Arabidopsis thaliana (Mouse-ear cress).